Consider the following 994-residue polypeptide: MAADGFVYRWLLFGTTIVLLAEAAQRHTASDNPSTYNIGGVLSNSDSEEHFSTTIKHLNFDQQYVPRKVTYYDKTIRMDKNPIKTVFNVCDKLIENRVYAVVVSHEQTSGDLSPAAVSYTSGFYSIPVIGISSRDAAFSDKNIHVSFLRTVPPYYHQADVWLEMLSHFSYTKVIIIHSSDTDGRAILGRFQTTSQTYYDDVDVRATVELIVEFEPKLESFTEHLIDMKTAQSRVYLMYASTEDAQVIFRDAGEYNMTGEGHVWIVTEQALFANNTPDGVLGLQLEHAHSDKGHIRDSVYVLASAIKEMISNETIGEAPKDCGDSAVNWESGKRLFQYLKSRNITGETGQVAFDDNGDRIYAGYDVINIREQQKKHVVGKFSYDNERAKMRMRINDSEIIWPGKQRRKPEGIMIPTHLKVLTIEEKPFVYVRRMGDDEFRCEPDERPCPLFNASDATANEFCCRGYCIDLLIELSKRINFTYDLALSPDGQFGHYILRNSTGAMTLRKEWTGLIGELVNERADMIVAPLTINPERAEYIEFSKPFKYQGITILEKKPSRSSTLVSFLQPFSNTLWILVMVSVHVVALVLYLLDRFSPFGRFKLSHSDSNEEKALNLSSAVWFAWGVLLNSGIGEGTPRSFSARVLGMVWAGFAMIIVASYTANLAAFLVLERPKTKLSGINDARLRNTMENLTCATVKGSSVDMYFRRQVELSNMYRTMEANNYATAEQAIQDVKKGKLMAFIWDSSRLEYEASKDCELVTAGELFGRSGYGIGLQKGSPWTDAVTLAILEFHESGFMEKLDKQWIFHGHVQQNCELFEKTPNTLGLKNMAGVFILVGVGIAGGVGLIIIEVIYKKHQVKKQKRLDIARHAADKWRGTIEKRKTIRASLAMQRQYNVGLNATHAPGTISLAVDKRRYPRLGQRLGPERAWPGDAADVLRIRRPYELGKPGQSPKVMGANQPTMPMPMLGKTRPQQNMLPPRYSPGYTSDVSHLVV.

A signal peptide spans 1-23; sequence MAADGFVYRWLLFGTTIVLLAEA. Over 24-570 the chain is Extracellular; the sequence is AQRHTASDNP…TLVSFLQPFS (547 aa). N-linked (GlcNAc...) asparagine glycosylation is found at Asn255, Asn311, Asn342, Asn394, Asn451, Asn478, and Asn498. Glycine-binding positions include 527-529 and Arg534; that span reads PLT. The chain crosses the membrane as a helical span at residues 571-591; that stretch reads NTLWILVMVSVHVVALVLYLL. At 592–648 the chain is on the cytoplasmic side; that stretch reads DRFSPFGRFKLSHSDSNEEKALNLSSAVWFAWGVLLNSGIGEGTPRSFSARVLGMVW. A helical transmembrane segment spans residues 649 to 669; sequence AGFAMIIVASYTANLAAFLVL. Topologically, residues 670-828 are extracellular; it reads ERPKTKLSGI…KTPNTLGLKN (159 aa). Asn690 carries N-linked (GlcNAc...) asparagine glycosylation. Glycine-binding residues include Ser700 and Asp744. Residues 829 to 849 form a helical membrane-spanning segment; that stretch reads MAGVFILVGVGIAGGVGLIII. The Cytoplasmic portion of the chain corresponds to 850-994; it reads EVIYKKHQVK…YTSDVSHLVV (145 aa). The segment at 971–994 is disordered; that stretch reads RPQQNMLPPRYSPGYTSDVSHLVV. Positions 984–994 are enriched in polar residues; the sequence is GYTSDVSHLVV.

This sequence belongs to the glutamate-gated ion channel (TC 1.A.10.1) family. Forms a heteromeric NMDA channel with Nmdar2.

Its subcellular location is the cell membrane. The protein resides in the postsynaptic cell membrane. It is found in the postsynaptic density. In terms of biological role, NMDA receptor subtype of glutamate-gated ion channels with high calcium permeability and voltage-dependent sensitivity to magnesium. Mediated by glycine. This protein plays a key role in synaptic plasticity, synaptogenesis, excitotoxicity, memory acquisition and learning. It mediates neuronal functions in glutamate neurotransmission. Is involved in the cell surface targeting of NMDA receptors. Plays a role in associative learning and in long-term memory consolidation. This is Glutamate [NMDA] receptor subunit 1 from Drosophila ananassae (Fruit fly).